A 226-amino-acid polypeptide reads, in one-letter code: Enolase-phosphatase E1 (226 aa).

This sequence belongs to the HAD-like hydrolase superfamily. MasA/MtnC family. Monomer. Mg(2+) serves as cofactor.

The enzyme catalyses 5-methylsulfanyl-2,3-dioxopentyl phosphate + H2O = 1,2-dihydroxy-5-(methylsulfanyl)pent-1-en-3-one + phosphate. The protein operates within amino-acid biosynthesis; L-methionine biosynthesis via salvage pathway; L-methionine from S-methyl-5-thio-alpha-D-ribose 1-phosphate: step 3/6. Its pathway is amino-acid biosynthesis; L-methionine biosynthesis via salvage pathway; L-methionine from S-methyl-5-thio-alpha-D-ribose 1-phosphate: step 4/6. Functionally, bifunctional enzyme that catalyzes the enolization of 2,3-diketo-5-methylthiopentyl-1-phosphate (DK-MTP-1-P) into the intermediate 2-hydroxy-3-keto-5-methylthiopentenyl-1-phosphate (HK-MTPenyl-1-P), which is then dephosphorylated to form the acireductone 1,2-dihydroxy-3-keto-5-methylthiopentene (DHK-MTPene). In Shewanella sp. (strain W3-18-1), this protein is Enolase-phosphatase E1.